A 354-amino-acid polypeptide reads, in one-letter code: Eukaryotic translation initiation factor 3 subunit H (354 aa).

The interval 1-28 is disordered; the sequence is MATRQPYQKKFQSRDQREQTSSQQAPNS. Polar residues predominate over residues 19–28; the sequence is QTSSQQAPNS. In terms of domain architecture, MPN spans 33–174; the sequence is VTVDALVVMK…LSAFRLSNKA (142 aa).

This sequence belongs to the eIF-3 subunit H family. Component of the eukaryotic translation initiation factor 3 (eIF-3) complex.

The protein localises to the cytoplasm. Component of the eukaryotic translation initiation factor 3 (eIF-3) complex, which is involved in protein synthesis of a specialized repertoire of mRNAs and, together with other initiation factors, stimulates binding of mRNA and methionyl-tRNAi to the 40S ribosome. The eIF-3 complex specifically targets and initiates translation of a subset of mRNAs involved in cell proliferation. The protein is Eukaryotic translation initiation factor 3 subunit H of Monosiga brevicollis (Choanoflagellate).